Reading from the N-terminus, the 338-residue chain is Holliday junction branch migration complex subunit RuvB (338 aa).

Residues 4–186 (ADRLIAPDNP…FGITQRLEYY (183 aa)) form a large ATPase domain (RuvB-L) region. Residues Ile-25, Arg-26, Gly-67, Lys-70, Thr-71, Thr-72, 133 to 135 (EDY), Arg-176, Tyr-186, and Arg-223 each bind ATP. Thr-71 serves as a coordination point for Mg(2+). Residues 187-257 (KVEDLQNIVQ…VADKALNMLD (71 aa)) are small ATPAse domain (RuvB-S). The tract at residues 260–338 (AKGFDYMDRK…HFGIDKPSNR (79 aa)) is head domain (RuvB-H). 3 residues coordinate DNA: Arg-296, Arg-315, and Arg-320.

It belongs to the RuvB family. In terms of assembly, homohexamer. Forms an RuvA(8)-RuvB(12)-Holliday junction (HJ) complex. HJ DNA is sandwiched between 2 RuvA tetramers; dsDNA enters through RuvA and exits via RuvB. An RuvB hexamer assembles on each DNA strand where it exits the tetramer. Each RuvB hexamer is contacted by two RuvA subunits (via domain III) on 2 adjacent RuvB subunits; this complex drives branch migration. In the full resolvosome a probable DNA-RuvA(4)-RuvB(12)-RuvC(2) complex forms which resolves the HJ.

It localises to the cytoplasm. It catalyses the reaction ATP + H2O = ADP + phosphate + H(+). Its function is as follows. The RuvA-RuvB-RuvC complex processes Holliday junction (HJ) DNA during genetic recombination and DNA repair, while the RuvA-RuvB complex plays an important role in the rescue of blocked DNA replication forks via replication fork reversal (RFR). RuvA specifically binds to HJ cruciform DNA, conferring on it an open structure. The RuvB hexamer acts as an ATP-dependent pump, pulling dsDNA into and through the RuvAB complex. RuvB forms 2 homohexamers on either side of HJ DNA bound by 1 or 2 RuvA tetramers; 4 subunits per hexamer contact DNA at a time. Coordinated motions by a converter formed by DNA-disengaged RuvB subunits stimulates ATP hydrolysis and nucleotide exchange. Immobilization of the converter enables RuvB to convert the ATP-contained energy into a lever motion, pulling 2 nucleotides of DNA out of the RuvA tetramer per ATP hydrolyzed, thus driving DNA branch migration. The RuvB motors rotate together with the DNA substrate, which together with the progressing nucleotide cycle form the mechanistic basis for DNA recombination by continuous HJ branch migration. Branch migration allows RuvC to scan DNA until it finds its consensus sequence, where it cleaves and resolves cruciform DNA. The sequence is that of Holliday junction branch migration complex subunit RuvB from Vibrio atlanticus (strain LGP32) (Vibrio splendidus (strain Mel32)).